Here is a 188-residue protein sequence, read N- to C-terminus: ATP-dependent protease subunit HslV (188 aa).

T8 is an active-site residue. Na(+) is bound by residues A165, C168, and T171.

Belongs to the peptidase T1B family. HslV subfamily. As to quaternary structure, a double ring-shaped homohexamer of HslV is capped on each side by a ring-shaped HslU homohexamer. The assembly of the HslU/HslV complex is dependent on binding of ATP.

The protein localises to the cytoplasm. The catalysed reaction is ATP-dependent cleavage of peptide bonds with broad specificity.. Allosterically activated by HslU binding. In terms of biological role, protease subunit of a proteasome-like degradation complex believed to be a general protein degrading machinery. The protein is ATP-dependent protease subunit HslV of Neorickettsia sennetsu (strain ATCC VR-367 / Miyayama) (Ehrlichia sennetsu).